Reading from the N-terminus, the 206-residue chain is Large ribosomal subunit protein uL4 (206 aa).

The segment at 63 to 93 (MYKQKGTGRARHHSARAPQFRGGGKAHGPVV) is disordered. The span at 64–77 (YKQKGTGRARHHSA) shows a compositional bias: basic residues.

The protein belongs to the universal ribosomal protein uL4 family. Part of the 50S ribosomal subunit.

Functionally, one of the primary rRNA binding proteins, this protein initially binds near the 5'-end of the 23S rRNA. It is important during the early stages of 50S assembly. It makes multiple contacts with different domains of the 23S rRNA in the assembled 50S subunit and ribosome. Its function is as follows. Forms part of the polypeptide exit tunnel. This Rhizobium meliloti (strain 1021) (Ensifer meliloti) protein is Large ribosomal subunit protein uL4.